Consider the following 156-residue polypeptide: Putative pre-16S rRNA nuclease (156 aa).

It belongs to the YqgF nuclease family.

The protein resides in the cytoplasm. In terms of biological role, could be a nuclease involved in processing of the 5'-end of pre-16S rRNA. The chain is Putative pre-16S rRNA nuclease from Caulobacter vibrioides (strain ATCC 19089 / CIP 103742 / CB 15) (Caulobacter crescentus).